A 174-amino-acid polypeptide reads, in one-letter code: MATVTELKAVLKDTLEKRGVLGHLKARIRAEVFNALDDDREPRPSLSHENLLINELIREYLEFNKYKYTASVLIAESGQPVVPLDRQFLIRELNAFEESKDNSIPLLYGILAHFLRGPPDGAQNVLLTESTLHPATKHLSWKPSRRPDDDHVRKDTGPRTTTEELPAAAQAVSR.

Residues 1 to 104 (MATVTELKAV…AFEESKDNSI (104 aa)) form a necessary and sufficient for homooligomerization and localization to centrosomes and pericentriolar satellites region. Positions 49-81 (ENLLINELIREYLEFNKYKYTASVLIAESGQPV) constitute a LisH domain. The tract at residues 136 to 174 (TKHLSWKPSRRPDDDHVRKDTGPRTTTEELPAAAQAVSR) is disordered. Phosphoserine is present on S144. The segment covering 145-157 (RRPDDDHVRKDTG) has biased composition (basic and acidic residues).

This sequence belongs to the CEP43 family. In terms of assembly, homooligomer; probably required for localization to centrosomes. Forms a complex with KIAA0753/OFIP and OFD1; within this complex may stabilize the interaction between OFD1 and KIAA0753/OFIP. Interacts with PCM1; this interaction may be mediated by KIAA0753/OFIP.

The protein localises to the cytoplasm. Its subcellular location is the cytoskeleton. The protein resides in the microtubule organizing center. It is found in the centrosome. It localises to the centriole. The protein localises to the cell projection. Its subcellular location is the cilium. The protein resides in the cilium basal body. It is found in the cytoplasmic granule. It localises to the centriolar satellite. Involved in the biogenesis of cilia. Required for the recruitment of PLK1 to centrosomes and S phase progression. In Mus musculus (Mouse), this protein is Centrosomal protein 20.